A 328-amino-acid polypeptide reads, in one-letter code: Phosphate acyltransferase (328 aa).

This sequence belongs to the PlsX family. Homodimer. Probably interacts with PlsY.

The protein resides in the cytoplasm. It catalyses the reaction a fatty acyl-[ACP] + phosphate = an acyl phosphate + holo-[ACP]. The protein operates within lipid metabolism; phospholipid metabolism. In terms of biological role, catalyzes the reversible formation of acyl-phosphate (acyl-PO(4)) from acyl-[acyl-carrier-protein] (acyl-ACP). This enzyme utilizes acyl-ACP as fatty acyl donor, but not acyl-CoA. The polypeptide is Phosphate acyltransferase (Pseudothermotoga lettingae (strain ATCC BAA-301 / DSM 14385 / NBRC 107922 / TMO) (Thermotoga lettingae)).